The sequence spans 445 residues: Succinate--CoA ligase [ADP-forming] subunit beta, mitochondrial (445 aa).

Residues 1-17 (MLSNIVKKTIQSSKNLK) constitute a mitochondrion transit peptide. An ATP-grasp domain is found at 43–270 (QKMMKSYGIN…DNAAFRHPDI (228 aa)). Residues Lys-80 and 87–89 (GRG) each bind ATP. Positions 240 and 254 each coordinate Mg(2+). Residues Asn-305 and 362–364 (GIM) each bind substrate.

It belongs to the succinate/malate CoA ligase beta subunit family. ATP-specific subunit beta subfamily. In terms of assembly, heterodimer of an alpha and a beta subunit. The beta subunit determines specificity for ATP. The cofactor is Mg(2+).

The protein resides in the mitochondrion. The catalysed reaction is succinate + ATP + CoA = succinyl-CoA + ADP + phosphate. The protein operates within carbohydrate metabolism; tricarboxylic acid cycle; succinate from succinyl-CoA (ligase route): step 1/1. In terms of biological role, ATP-specific succinyl-CoA synthetase functions in the citric acid cycle (TCA), coupling the hydrolysis of succinyl-CoA to the synthesis of ATP and thus represents the only step of substrate-level phosphorylation in the TCA. The beta subunit provides nucleotide specificity of the enzyme and binds the substrate succinate, while the binding sites for coenzyme A and phosphate are found in the alpha subunit. This Dictyostelium discoideum (Social amoeba) protein is Succinate--CoA ligase [ADP-forming] subunit beta, mitochondrial (scsC).